Reading from the N-terminus, the 110-residue chain is UPF0060 membrane protein Pnap_4944 (110 aa).

The next 4 helical transmembrane spans lie at 8-28 (ILFA…WLVL), 33-53 (SLLL…LLTL), 65-85 (YGGM…GIAL), and 88-108 (WDLS…MQPS).

The protein belongs to the UPF0060 family.

Its subcellular location is the cell inner membrane. This Polaromonas naphthalenivorans (strain CJ2) protein is UPF0060 membrane protein Pnap_4944.